The sequence spans 122 residues: Large ribosomal subunit protein uL14c (122 aa).

It belongs to the universal ribosomal protein uL14 family. In terms of assembly, part of the 50S ribosomal subunit.

It is found in the plastid. The protein resides in the chloroplast. In terms of biological role, binds to 23S rRNA. The polypeptide is Large ribosomal subunit protein uL14c (Populus alba (White poplar)).